The primary structure comprises 633 residues: MNRLGRLSLPLRPQVCLLCQTQATMSSPLAGWQAVRSMATVRQRRQAARMVLSSNVDKSSLKQGRSKRDRAGPWSGMNQTEARLRDAPRSRSRAALKRSGDSEDDKQKPDSPLYKALKMQTALAPIPYGRRTAIKNKIAEVSSFDQFPLLPVVRHSISSQALSRTGDIVPTPIQRLAIPQLLKDPIPKRTSKDVSDHEPNFEQYLLAAETGSGKTLAYLIPLIDSLKRMEVEDKEFEKWEAEQKAKEREEKLKNRAFDIEPEEAPLSDAGRPRVIILVPTSELVAQVGAKVKALSHTVKYRSGMISSNLTPRRIKSILFNPSGIDILVATPHLLASIAKTDPYVLSRVSHLVLDEADSLMDRSFLPTTTEIIEKSASSLHKLILCSATIPRSLDNLLRKRYPDIRRLTTPNLHAIPRRVQLGVVDIQRDPYRGNRSLACADVIWSIGKAGDTEPTHPFLAQAGPKVKKILVFVNEREEADEVAQFLRSKGIDAQSFSRDSSSRKQEELLEEFTESPIPPTAEEIMLAKNKRRQDNSIPFVFPEQQNKPGAERGLPNTKVLVTTDIASRGIDTIAVKTVILYHVPHNTIDFIHRLGRLGRMGKRGRAVVLVGKKDRKDVVKEVREGMFRGQALI.

A mitochondrion-targeting transit peptide spans M1–M38. Positions M50 to K115 are disordered. A compositionally biased stretch (polar residues) spans L52–Q63. Residues R98–P109 show a composition bias toward basic and acidic residues. Positions S142 to R175 match the Q motif motif. Positions S195–L407 constitute a Helicase ATP-binding domain. A208–T215 lines the ATP pocket. The short motif at D354–D357 is the DEAD box element. The 176-residue stretch at F458–I633 folds into the Helicase C-terminal domain.

It belongs to the DEAD box helicase family. MRH4 subfamily.

It is found in the mitochondrion. It catalyses the reaction ATP + H2O = ADP + phosphate + H(+). Its function is as follows. ATP-binding RNA helicase involved in mitochondrial RNA metabolism. Required for maintenance of mitochondrial DNA. The chain is ATP-dependent RNA helicase mrh4, mitochondrial (mrh4) from Aspergillus niger (strain ATCC MYA-4892 / CBS 513.88 / FGSC A1513).